Consider the following 298-residue polypeptide: MSDNPFRSGFVSIIGRPNVGKSTLLNRILGEKIVITSDKPQTTRNRIQGIHNVPGAQIVFIDTPGIHQARSRLNKYMVEVALSAIREVDLVLFLVEANQKPGEQEQEIIDVLAGATAPVFLVINKVDLTEKGAVLERIAAYKDRYPFREIVPISAGTGDGVDHLVELVRKALPQGPVYFPDDILTDVPERFIAAEIIREKVFRMTRDEVPYATAVEVDSFKEREDGGLVSIAATITVERDSQKGIIIGKKGAMLKKIGSAARVEIEKLLNTKVFLELFVRVRKDWSEDERMLKELGYT.

The Era-type G domain maps to 7–174 (RSGFVSIIGR…VELVRKALPQ (168 aa)). The tract at residues 15-22 (GRPNVGKS) is G1. 15–22 (GRPNVGKS) contributes to the GTP binding site. The tract at residues 41 to 45 (QTTRN) is G2. The tract at residues 62–65 (DTPG) is G3. GTP-binding positions include 62 to 66 (DTPGI) and 124 to 127 (NKVD). The tract at residues 124-127 (NKVD) is G4. The segment at 153-155 (ISA) is G5. A KH type-2 domain is found at 205-283 (TRDEVPYATA…FLELFVRVRK (79 aa)).

The protein belongs to the TRAFAC class TrmE-Era-EngA-EngB-Septin-like GTPase superfamily. Era GTPase family. As to quaternary structure, monomer.

The protein resides in the cytoplasm. It localises to the cell inner membrane. In terms of biological role, an essential GTPase that binds both GDP and GTP, with rapid nucleotide exchange. Plays a role in 16S rRNA processing and 30S ribosomal subunit biogenesis and possibly also in cell cycle regulation and energy metabolism. In Geobacter metallireducens (strain ATCC 53774 / DSM 7210 / GS-15), this protein is GTPase Era.